The sequence spans 467 residues: Serine/threonine-protein kinase US3 homolog (467 aa).

The tract at residues 64–155 (GPEVAPPART…PAGGVTREEA (92 aa)) is disordered. Positions 99-111 (NERRAATGDEKES) are enriched in basic and acidic residues. A compositionally biased stretch (acidic residues) spans 117 to 144 (NESESESESESESESGADDGDWDDDDDA). The region spanning 164 to 462 (FRIIRRLTPG…AAELLEHPVF (299 aa)) is the Protein kinase domain. ATP is bound by residues 170-178 (LTPGSEGRV) and K194. The active-site Proton acceptor is the D279.

It belongs to the protein kinase superfamily. Ser/Thr protein kinase family. Phosphorylated by UL13 homolog; this phosphorylation regulates subsequent phosphorylation of UL31 and UL34 homologs by US3. Autophosphorylated.

The protein localises to the host cytoplasm. It is found in the host nucleus. It carries out the reaction L-seryl-[protein] + ATP = O-phospho-L-seryl-[protein] + ADP + H(+). The catalysed reaction is L-threonyl-[protein] + ATP = O-phospho-L-threonyl-[protein] + ADP + H(+). In terms of biological role, multifunctional serine/threonine kinase that plays a role in several processes including egress of virus particles from the nucleus, modulation of the actin cytoskeleton and inhibition of apoptosis. Phosphorylates UL31 and UL34 homologs, two critical regulators of capsid budding from nucleus to endoplasmic reticulum, thereby facilitating virion egress. Modulates and redistributes host components of the nuclear envelope, including LMNA, emerin/EMD and the nuclear matrix protein MATR3. Phosphorylates envelope glycoprotein B (gB), probably to direct it to the cell surface. Promotes virus intracellular spread by restructuring host cell cytoskeleton. Blocks host apoptosis to extend cell survival and allow efficient viral replication. Promotes viral gene expression by phosphorylating host HDAC2 to reduce viral genome silencing. In Bos taurus (Bovine), this protein is Serine/threonine-protein kinase US3 homolog.